We begin with the raw amino-acid sequence, 530 residues long: White collar 2 protein (530 aa).

Tandem repeats lie at residues 9-12 (GSSM), 21-24 (GSGM), 25-28 (GSGM), 29-32 (GSGM), 33-36 (GTGM), 37-40 (GTGM), and 41-44 (GTGM). Residues 9 to 44 (GSSMYGFGAMGMGSGMGSGMGSGMGTGMGTGMGTGM) form a 7 X 4 AA repeats of G-[SAT]-G-M region. The tract at residues 134–158 (IATPTTTTSGPSGGPSSGGGSTLTE) is disordered. A compositionally biased stretch (gly residues) spans 144-154 (PSGGPSSGGGS). A PAS domain is found at 162–232 (RRNWPAKVVE…AELNEAIATG (71 aa)). Positions 315–343 (REEQEEQEESHRTWRMSQEGRSDVTPSDD) are disordered. A GATA-type zinc finger spans residues 468 to 493 (CTDCGTLDSPEWRKGPSGPKTLCNAC). The tract at residues 504–530 (KNANNNNNGGGIGGHNDIHTPMGDHMG) is disordered.

As to quaternary structure, heterodimer of wc-1 and wc-2 (Potential). Binds to DNA.

The protein resides in the nucleus. Functionally, may function as a transcription factor involved in light regulation. Binds and affects blue light regulation of the al-3 gene. Wc-1 and wc-2 interact via homologous PAS domains, bind to promoters of light regulated genes such as frq, and activate transcription. May bind directly to frq. The sequence is that of White collar 2 protein (wc-2) from Neurospora crassa (strain ATCC 24698 / 74-OR23-1A / CBS 708.71 / DSM 1257 / FGSC 987).